A 331-amino-acid polypeptide reads, in one-letter code: D-galactose/methyl-galactoside binding periplasmic protein MglB (331 aa).

Residues 1–24 (MKKTAVLSTVAFAIALGSASASFA) form the signal peptide. Beta-D-galactose is bound by residues Asp38 and Asn115. The beta-D-glucose site is built by Asp38 and Asn115. Ca(2+) is bound by residues Asp158, Asn160, Asp162, Lys164, and Gln166. The beta-D-galactose site is built by His176, Asp178, and Arg182. Beta-D-glucose contacts are provided by His176, Asp178, and Arg182. Residue Glu229 coordinates Ca(2+). Beta-D-galactose is bound by residues Asn235, Asp259, and Asn279. Asn235, Asp259, and Asn279 together coordinate beta-D-glucose.

Belongs to the bacterial solute-binding protein 2 family. In terms of assembly, the ABC transporter complex is composed of one ATP-binding protein (MglA), two transmembrane proteins (MglC) and a solute-binding protein (MglB).

It localises to the periplasm. In terms of biological role, part of the ABC transporter complex MglABC involved in galactose/methyl galactoside import. This Haemophilus influenzae (strain ATCC 51907 / DSM 11121 / KW20 / Rd) protein is D-galactose/methyl-galactoside binding periplasmic protein MglB (mglB).